Here is a 627-residue protein sequence, read N- to C-terminus: (-)-beta-pinene synthase 2, chloroplastic (627 aa).

A chloroplast-targeting transit peptide spans 1–51 (MDLISVLPSASKSCVCLHKPLSSSTHKLKPFCRKIRILGMPRPRKSVLMVS). Positions 378, 382, and 530 each coordinate Mg(2+). The DDXXD motif motif lies at 378–382 (DDMYD).

This sequence belongs to the terpene synthase family. Tpsd subfamily. The cofactor is Mg(2+). Mn(2+) is required as a cofactor.

The protein resides in the plastid. It is found in the chloroplast. It carries out the reaction (2E)-geranyl diphosphate = (1S,5S)-beta-pinene + diphosphate. The enzyme catalyses (2E)-geranyl diphosphate = (1S,5S)-alpha-pinene + diphosphate. It participates in terpene metabolism; oleoresin biosynthesis. The protein operates within secondary metabolite biosynthesis; terpenoid biosynthesis. Functionally, monoterpene synthase (TPS) involved in the biosynthesis of monoterpene natural products included in conifer oleoresin secretions and volatile emissions; these compounds contribute to biotic and abiotic stress defense against herbivores and pathogens. Catalyzes the conversion of (2E)-geranyl diphosphate (GPP) to (-)-beta-pinene and, to a lower extent, to (-)-alpha-pinene. This is (-)-beta-pinene synthase 2, chloroplastic from Pinus banksiana (Jack pine).